Reading from the N-terminus, the 356-residue chain is Protein ATP1B4 (356 aa).

The Nuclear portion of the chain corresponds to 1 to 109; that stretch reads MRRQLRSRRA…SLARTGQSRS (109 aa). A disordered region spans residues 26–78; sequence EANHNYLADEEEEAEEEAQVMMVPGLEEEEEEEEGKEEEEEREEEEGQGQSTG. 2 stretches are compositionally biased toward acidic residues: residues 33–43 and 51–72; these read ADEEEEAEEEA and LEEE…EEEG. The helical; Signal-anchor for type II membrane protein transmembrane segment at 110-130 threads the bilayer; sequence LILVIYFFFYASLAAVITLFI. The Perinuclear space portion of the chain corresponds to 131-356; sequence YMLFLAISPY…RIIFTLNIET (226 aa).

The protein belongs to the X(+)/potassium ATPases subunit beta family. Associates with a SMAD7-transcriptional complex. Interacts with TOR1AIP1. Does not associate with known Na,K-ATPase alpha-subunits. Interacts with SNW1. As to expression, expressed in skeletal muscle (at protein level). Expressed during postnatal development in skeletal muscle and heart.

It is found in the nucleus inner membrane. Functionally, may act as a transcriptional coregulator during muscle development through its interaction with SNW1. Has lost its ancestral function as a Na,K-ATPase beta-subunit. This Mus musculus (Mouse) protein is Protein ATP1B4 (Atp1b4).